A 308-amino-acid polypeptide reads, in one-letter code: MLNKPSGISSNRALQISKRLLSAAKAGHTGTLDPMAQGLLPICLGEATKFSSTLLGVDKTYIASLRLGYISNTGDAEGEIRQVVGSDVNPPDFGQVTGILQTFLGRSSQIPPMFSALKQHGKPLYRYAREGITVERKAREIVIHAASLDTLSGFEMTITVRCSSGTYVRTLAEDIGKALGYGGAYLTALSRISVGHFELSQACDLDQLESETPVNRQKLLCPIDSLLNDIPSIVLDDDEALRLRQGQKIRKNMSRYGLPVNTQLKLYDDRNVFLGLGERIDPEVIVPRRMISLHEVVTGAIAGSVDLQ.

Catalysis depends on Asp-33, which acts as the Nucleophile.

It belongs to the pseudouridine synthase TruB family. Type 1 subfamily.

It carries out the reaction uridine(55) in tRNA = pseudouridine(55) in tRNA. Functionally, responsible for synthesis of pseudouridine from uracil-55 in the psi GC loop of transfer RNAs. The chain is tRNA pseudouridine synthase B from Nitrosomonas europaea (strain ATCC 19718 / CIP 103999 / KCTC 2705 / NBRC 14298).